The chain runs to 339 residues: Mitogen-activated protein kinase kinase kinase 18 (339 aa).

The region spanning Trp3–Leu263 is the Protein kinase domain. ATP-binding positions include Leu9–Val17 and Lys32. Asp131 acts as the Proton acceptor in catalysis. The residue at position 301 (Ser301) is a Phosphoserine.

The protein belongs to the protein kinase superfamily. Ser/Thr protein kinase family. In terms of assembly, interacts with ABI1. Binds to MKK3. Associates with SRK2E within the nucleus. In terms of processing, autophosphorylated. Unstable protein degraded by the proteasome pathway; this degradation is promoted by ABI1, but blocked by ABA. Expressed in roots, leaves and flowers.

The protein resides in the nucleus. The catalysed reaction is L-seryl-[protein] + ATP = O-phospho-L-seryl-[protein] + ADP + H(+). It catalyses the reaction L-threonyl-[protein] + ATP = O-phospho-L-threonyl-[protein] + ADP + H(+). Kinase activity is activated by abscisic acid (ABA). Inhibited by ABI1. Activated by SRK2E. In terms of biological role, component of the abscisic acid (ABA) signaling pathway that acts as ABA signal transducer in the context of abiotic stresses. Triggers MPK1, MPK2, MPK7 and MPK14 activation in a MKK3-dependent manner and MPK6 activation in a MKK3-independent manner. Mediates the ABA-dependent activation of the MKK3-MPK7 module. Positive regulator of ABA responses leading to the induction of gene expression (e.g. RD29B and RAB18) and involved in various responses including stomatal development, stomatal movement, inhibition of germination and root growth. Promotes leaf senescence. The chain is Mitogen-activated protein kinase kinase kinase 18 from Arabidopsis thaliana (Mouse-ear cress).